Consider the following 415-residue polypeptide: ORC1-type DNA replication protein 2 (415 aa).

ATP contacts are provided by residues 69-73, Y215, and R227; that span reads TGKSV.

It belongs to the CDC6/cdc18 family.

Involved in regulation of DNA replication. This Sulfolobus acidocaldarius (strain ATCC 33909 / DSM 639 / JCM 8929 / NBRC 15157 / NCIMB 11770) protein is ORC1-type DNA replication protein 2 (cdc6-2).